A 109-amino-acid polypeptide reads, in one-letter code: Large ribosomal subunit protein uL22 (109 aa).

The protein belongs to the universal ribosomal protein uL22 family. Part of the 50S ribosomal subunit.

In terms of biological role, this protein binds specifically to 23S rRNA; its binding is stimulated by other ribosomal proteins, e.g. L4, L17, and L20. It is important during the early stages of 50S assembly. It makes multiple contacts with different domains of the 23S rRNA in the assembled 50S subunit and ribosome. Functionally, the globular domain of the protein is located near the polypeptide exit tunnel on the outside of the subunit, while an extended beta-hairpin is found that lines the wall of the exit tunnel in the center of the 70S ribosome. The chain is Large ribosomal subunit protein uL22 from Thiobacillus denitrificans (strain ATCC 25259 / T1).